The sequence spans 472 residues: Tryptophanase (472 aa).

Residue Lys-270 is modified to N6-(pyridoxal phosphate)lysine.

It belongs to the beta-eliminating lyase family. Homotetramer. Pyridoxal 5'-phosphate is required as a cofactor.

It carries out the reaction L-tryptophan + H2O = indole + pyruvate + NH4(+). The protein operates within amino-acid degradation; L-tryptophan degradation via pyruvate pathway; indole and pyruvate from L-tryptophan: step 1/1. This chain is Tryptophanase, found in Haemophilus influenzae (strain 86-028NP).